The chain runs to 888 residues: 3-hydroxy-3-methylglutaryl-coenzyme A reductase (888 aa).

Topologically, residues 1 to 9 (MLSRLFRMH) are cytoplasmic. A helical transmembrane segment spans residues 10-39 (GLFVASHPWEVIVGTVTLTICMMSMNMFTG). Residues 40-56 (NNKICGWNYECPKLEED) lie on the Lumenal side of the membrane. The chain crosses the membrane as a helical span at residues 57–78 (VLSSDIIILTITRCIAILYIYF). The SSD domain occupies 61–218 (DIIILTITRC…MTFFPACVSL (158 aa)). The INSIG-binding motif motif lies at 75–78 (YIYF). Over 79 to 89 (QFQNLRQLGSK) the chain is Cytoplasmic. Lysine 89 participates in a covalent cross-link: Glycyl lysine isopeptide (Lys-Gly) (interchain with G-Cter in ubiquitin). The chain crosses the membrane as a helical span at residues 90 to 114 (YILGIAGLFTIFSSFVFSTVVIHFL). Residues 115–123 (DKELTGLNE) lie on the Lumenal side of the membrane. A helical membrane pass occupies residues 124–149 (ALPFFLLLVDLSRASALAKFALSSNS). The Cytoplasmic portion of the chain corresponds to 150-159 (QDEVRENIAR). A helical membrane pass occupies residues 160-187 (GMAILGPTFTLDALVECLVIGVGTMSGV). At 188-191 (RQLE) the chain is on the lumenal side. The helical transmembrane segment at 192 to 220 (IMCCFGCMSVLANYFVFMTFFPACVSLVL) threads the bilayer. Residues 221-248 (ELSRESREGRPIWQLSHFARVLEEEENK) lie on the Cytoplasmic side of the membrane. Residue lysine 248 forms a Glycyl lysine isopeptide (Lys-Gly) (interchain with G-Cter in ubiquitin) linkage. Residues 249–275 (PNPVTQRVKMIMSLGLVLVHAHSRWIA) form a helical membrane-spanning segment. Topologically, residues 276-314 (DPSPQNSTADNSKVSLGLDENVSKRIEPSVSLWQFYLSK) are lumenal. Residues asparagine 281 and asparagine 296 are each glycosylated (N-linked (GlcNAc...) asparagine). Residues 315–339 (MISMDIEQVITLSLALLLAVKYIFF) form a helical membrane-spanning segment. Residues 340 to 888 (EQAETESTLS…LQGTCTKKAA (549 aa)) are Cytoplasmic-facing. Residues glutamate 559, lysine 691, and aspartate 767 each act as charge relay system in the active site. Histidine 866 (proton donor) is an active-site residue. Serine 872 carries the phosphoserine; by AMPK modification.

It belongs to the HMG-CoA reductase family. Homotetramer. Homodimer. Interacts (via its SSD) with INSIG1; the interaction, accelerated by sterols, leads to the recruitment of HMGCR to AMFR/gp78 for its ubiquitination by the sterol-mediated ERAD pathway. Interacts with UBIAD1. Undergoes sterol-mediated ubiquitination and ER-associated degradation (ERAD). Accumulation of sterols in the endoplasmic reticulum (ER) membrane, triggers binding of the reductase to the ER membrane protein INSIG1 or INSIG2. The INSIG1 binding leads to the recruitment of the ubiquitin ligase, AMFR/gp78, RNF139 or RNF145, initiating ubiquitination of the reductase. The ubiquitinated reductase is then extracted from the ER membrane and delivered to cytosolic 26S proteosomes by a mechanism probably mediated by the ATPase Valosin-containing protein VCP/p97. The INSIG2-binding leads to the recruitment of the ubiquitin ligase RNF139, initiating ubiquitination of the reductase. Lys-248 is the main site of ubiquitination. Ubiquitination is enhanced by the presence of a geranylgeranylated protein. Post-translationally, N-glycosylated. Deglycosylated by NGLY1 on release from the endoplasmic reticulum (ER) in a sterol-mediated manner. In terms of processing, phosphorylated. Phosphorylation at Ser-872 reduces the catalytic activity.

Its subcellular location is the endoplasmic reticulum membrane. The protein resides in the peroxisome membrane. The enzyme catalyses (R)-mevalonate + 2 NADP(+) + CoA = (3S)-3-hydroxy-3-methylglutaryl-CoA + 2 NADPH + 2 H(+). Its pathway is metabolic intermediate biosynthesis; (R)-mevalonate biosynthesis; (R)-mevalonate from acetyl-CoA: step 3/3. Its activity is regulated as follows. Regulated by a negative feedback mechanism through sterols and non-sterol metabolites derived from mevalonate. Phosphorylation at Ser-872 down-regulates the catalytic activity. Its function is as follows. Catalyzes the conversion of (3S)-hydroxy-3-methylglutaryl-CoA (HMG-CoA) to mevalonic acid, the rate-limiting step in the synthesis of cholesterol and other isoprenoids, thus plays a critical role in cellular cholesterol homeostasis. This Bos taurus (Bovine) protein is 3-hydroxy-3-methylglutaryl-coenzyme A reductase (HMGCR).